A 93-amino-acid chain; its full sequence is Zinc metalloproteinase-disintegrin-like leucurogin (93 aa).

The Disintegrin domain occupies 8–93 (PPVCGNELLE…SECPADVGHK (86 aa)). Ca(2+)-binding residues include Val10, Asn13, Leu15, Glu17, Glu20, and Asp23. 7 cysteine pairs are disulfide-bonded: Cys11/Cys40, Cys22/Cys35, Cys24/Cys30, Cys34/Cys57, Cys48/Cys54, Cys53/Cys79, and Cys66/Cys86. The D/ECD-tripeptide signature appears at 72 to 74 (ECD). Positions 74, 75, 77, 89, and 90 each coordinate Ca(2+). The tract at residues 74–93 (DPAEHCTGQSSECPADVGHK) is disordered.

The protein belongs to the venom metalloproteinase (M12B) family. P-III subfamily. Monomer. Zn(2+) is required as a cofactor. Post-translationally, N-glycosylated. Expressed by the venom gland.

The protein resides in the secreted. Functionally, snake venom zinc metalloprotease that possesses hemorrhagic activity. The disintegrin-like domain has been expressed and named leucurogin. This recombinant disintegrin is able to inhibit collagen-induced platelet aggregation but not ADP- or arachidonic acid-induced platelet aggregation. Furthermore, it inhibits the adhesion of human fibroblasts to collagen type I. It also reduces adhesion and migration of human fibroblasts and inhibits migration and proliferation of human and mouse melanoma cell lines (BLM, and B16-F10-Nex2). In vitro, it inhibits the vascular structures formation by endothelial cells. In addition, it inhibits the growth of experimental Ehrlich tumor and has anti-angiogenesis effect on the sponge implant model. In vivo, when intraperitoneally injected into mice, it inhibits lung metastasis of B16F10 Nex-2 cells. In the treatment of human melanoma, grafted intradermally in the nude mice flank, it inhibits tumor growth. The protein is Zinc metalloproteinase-disintegrin-like leucurogin of Bothrops leucurus (Whitetail lancehead).